Reading from the N-terminus, the 393-residue chain is Cytochrome b (393 aa).

4 helical membrane passes run 32-52 (FGSL…TLAM), 76-98 (WLIR…LHMG), 113-133 (VWTL…LGYV), and 179-199 (FFAL…MHLI). H82 and H96 together coordinate heme b. Heme b-binding residues include H183 and H197. An a ubiquinone-binding site is contributed by H202. 4 helical membrane-spanning segments follow: residues 226 to 246 (FIFK…IFVF), 290 to 310 (LLGV…PFTD), 322 to 342 (LSKI…KLGA), and 349 to 369 (FIEF…IIVP).

This sequence belongs to the cytochrome b family. Fungal cytochrome b-c1 complex contains 10 subunits; 3 respiratory subunits, 2 core proteins and 5 low-molecular weight proteins. Cytochrome b-c1 complex is a homodimer. The cofactor is heme b.

It is found in the mitochondrion inner membrane. Component of the ubiquinol-cytochrome c reductase complex (complex III or cytochrome b-c1 complex) that is part of the mitochondrial respiratory chain. The b-c1 complex mediates electron transfer from ubiquinol to cytochrome c. Contributes to the generation of a proton gradient across the mitochondrial membrane that is then used for ATP synthesis. This chain is Cytochrome b (COB), found in Venturia inaequalis (Apple scab fungus).